The primary structure comprises 853 residues: WEB family protein At5g16730, chloroplastic (853 aa).

2 stretches are compositionally biased toward low complexity: residues 1–27 (MASKTKTSLSETTTTTTPTGKSSPATP) and 36–49 (KSETSNNNSPSTTT). The transit peptide at 1-84 (MASKTKTSLS…PTPPEKSQAR (84 aa)) directs the protein to the chloroplast. Disordered stretches follow at residues 1–106 (MASK…IKED), 386–465 (KEDL…SKKA), 666–765 (LAKK…SVEV), and 778–820 (KEAF…ALTA). A compositionally biased stretch (polar residues) spans 92–101 (ESPQTTTRLS). Residues 94–670 (PQTTTRLSQI…LEEAILAKKQ (577 aa)) are a coiled coil. 3 stretches are compositionally biased toward basic and acidic residues: residues 402–465 (EVSK…SKKA), 698–718 (NGHRSVEEKSAKVETLDHEPP), and 732–753 (MEEKEVNGKPEVETEKKEKKDE). The span at 754-763 (SQDDDKDDSV) shows a compositional bias: acidic residues. A compositionally biased stretch (basic and acidic residues) spans 778–788 (KEAFPDKKSEL). Position 790 is a phosphoserine (serine 790). The span at 797 to 807 (SSKIDESDKTS) shows a compositional bias: basic and acidic residues.

Belongs to the WEB family.

The protein resides in the plastid. It is found in the chloroplast. This is WEB family protein At5g16730, chloroplastic from Arabidopsis thaliana (Mouse-ear cress).